The sequence spans 623 residues: Membralin-like protein At1g60995 (623 aa).

The chain crosses the membrane as a helical span at residues 24-44 (GFLEYTYLFVAITLFCILVVM). The disordered stretch occupies residues 99 to 119 (SLEVSKTDQESSTSEENTDDT). Helical transmembrane passes span 315–335 (GVLMMSLFVFFTTTMSVSFTL), 363–383 (IFVHVIESLVFVPIMIGILFF), 392–412 (LLAFMVLVLVWLCELFTLISV), and 424–444 (FFLLYFLVFHIYFFSYAYGFS). Disordered stretches follow at residues 506 to 567 (NRTT…QAGA) and 602 to 623 (EAQVFADTSPPQNPHHDPLSVD). Polar residues predominate over residues 514-531 (PSGPNHTTPNQNTETRSF).

Belongs to the membralin family.

Its subcellular location is the membrane. This chain is Membralin-like protein At1g60995, found in Arabidopsis thaliana (Mouse-ear cress).